Consider the following 1037-residue polypeptide: Multidrug resistance protein MdtF (1037 aa).

Topologically, residues 1 to 9 are cytoplasmic; it reads MANYFIDRP. A helical membrane pass occupies residues 10–28; sequence VFAWVLAIIMMLAGGLAIM. Topologically, residues 29–339 are periplasmic; that stretch reads NLPVAQYPQI…TPFIEISIQE (311 aa). Residues 340–359 form a helical membrane-spanning segment; that stretch reads VFKTLVEAIILVFLVMYLFL. The Cytoplasmic portion of the chain corresponds to 360 to 365; sequence QNFRAT. The chain crosses the membrane as a helical span at residues 366-385; that stretch reads IIPTIAVPVVILGTFAILSA. Residues 386–391 lie on the Periplasmic side of the membrane; that stretch reads VGFTIN. The chain crosses the membrane as a helical span at residues 392–413; sequence TLTMFGMVLAIGLLVDDAIVVV. The Cytoplasmic portion of the chain corresponds to 414-441; that stretch reads ENVERVIAEDKLPPKEATHKSMGQIQRA. Residues 442–460 form a helical membrane-spanning segment; the sequence is LVGIAVVLSAVFMPMAFMS. At 461 to 473 the chain is on the periplasmic side; that stretch reads GATGEIYRQFSIT. The chain crosses the membrane as a helical span at residues 474–496; it reads LISSMLLSVFVAMSLTPALCATI. Residues 497–536 are Cytoplasmic-facing; sequence LKAAPEGGHKPNALFARFNTLFEKSTQHYTDSTRSLLRCT. A helical transmembrane segment spans residues 537-555; that stretch reads GRYMVVYLLICAGMAVLFL. The Periplasmic segment spans residues 556 to 870; that stretch reads RTPTSFLPEE…SYQEALSSNQ (315 aa). The chain crosses the membrane as a helical span at residues 871 to 890; that stretch reads APALYAISLVVVFLALAALY. Topologically, residues 891–896 are cytoplasmic; the sequence is ESWSIP. The chain crosses the membrane as a helical span at residues 897–916; the sequence is FSVMLVVPLGVVGALLATDL. Residues 917-922 are Periplasmic-facing; the sequence is RGLSND. A helical membrane pass occupies residues 923 to 944; the sequence is VYFQVGLLTTIGLSAKNAILIV. Topologically, residues 945-972 are cytoplasmic; the sequence is EFAVEMMQKEGKTPIEAIIEAARMRLRP. The chain crosses the membrane as a helical span at residues 973 to 991; the sequence is ILMTSLAFILGVLPLVISH. The Periplasmic segment spans residues 992-1004; the sequence is GAGSGAQNAVGTG. Residues 1005 to 1027 form a helical membrane-spanning segment; that stretch reads VMGGMFAATVLAIYFVPVFFVVV. Topologically, residues 1028-1037 are cytoplasmic; that stretch reads EHLFARFKKA.

Belongs to the resistance-nodulation-cell division (RND) (TC 2.A.6) family. In terms of assembly, homotrimer. Part of the tripartite efflux system MdtEF-TolC, which is composed of an inner membrane transporter, MdtF, a membrane fusion protein, MdtE, and an outer membrane component, TolC. The complex forms a large protein conduit and can translocate molecules across both the inner and outer membranes.

It localises to the cell inner membrane. Its function is as follows. Part of the tripartite efflux system MdtEF-TolC, which confers resistance to compounds such as rhodamine 6G, erythromycin, doxorubicin, ethidium bromide, TPP, SDS, deoxycholate, crystal violet and benzalkonium. The protein is Multidrug resistance protein MdtF (mdtF) of Escherichia coli (strain K12).